Here is a 295-residue protein sequence, read N- to C-terminus: Cyclic dipyrimidine nucleotide synthase CdnE (295 aa).

The tract at residues 1–25 is disordered; that stretch reads MSIDWEQTFRKWSKPSSETESTKAE. UTP-binding residues include Gln-51, Ser-53, and Asn-59. Residues Asp-65 and Asp-67 each coordinate Mg(2+). 3 residues coordinate UTP: Asp-67, Asp-124, and Lys-125. Mg(2+)-binding residues include Asp-128 and Asp-139. Positions 139, 173, 201, and 220 each coordinate UTP. The Pyrimidine specificity motif (R/Q)xW in donor pocket motif lies at 274 to 276; sequence QMW.

It belongs to the CD-NTase family. E02 subfamily. The cofactor is Mg(2+).

It catalyses the reaction 2 UTP = c-di-UMP + 2 diphosphate. The catalysed reaction is UTP + CTP = cyclic CMP-UMP + 2 diphosphate. In terms of biological role, cyclic nucleotide synthase (second messenger synthase) of a CBASS antivirus system. CBASS (cyclic oligonucleotide-based antiphage signaling system) provides immunity against bacteriophage. The CD-NTase protein synthesizes cyclic nucleotides in response to infection; these serve as specific second messenger signals. The signals activate a diverse range of effectors, leading to bacterial cell death and thus abortive phage infection. A type I-B(UU) CBASS system. Cyclic dinucleotide synthase that catalyzes the synthesis of 3',3'-cyclic UMP-UMP (c-di-UMP) as the major product, and of 3',3'-cyclic CMP-UMP as a minor product, which are second messengers for cell signal transduction. This Legionella pneumophila protein is Cyclic dipyrimidine nucleotide synthase CdnE.